Consider the following 404-residue polypeptide: LL-diaminopimelate aminotransferase (404 aa).

The substrate site is built by tyrosine 15 and glycine 42. Pyridoxal 5'-phosphate contacts are provided by residues tyrosine 72, 108-109, tyrosine 132, asparagine 188, tyrosine 219, and 247-249; these read AK and SFS. Residues lysine 109, tyrosine 132, and asparagine 188 each coordinate substrate. Residue lysine 250 is modified to N6-(pyridoxal phosphate)lysine. Residues arginine 258 and asparagine 288 each coordinate pyridoxal 5'-phosphate. The substrate site is built by asparagine 288 and arginine 384.

The protein belongs to the class-I pyridoxal-phosphate-dependent aminotransferase family. LL-diaminopimelate aminotransferase subfamily. Homodimer. The cofactor is pyridoxal 5'-phosphate.

The enzyme catalyses (2S,6S)-2,6-diaminopimelate + 2-oxoglutarate = (S)-2,3,4,5-tetrahydrodipicolinate + L-glutamate + H2O + H(+). The protein operates within amino-acid biosynthesis; L-lysine biosynthesis via DAP pathway; LL-2,6-diaminopimelate from (S)-tetrahydrodipicolinate (aminotransferase route): step 1/1. Its function is as follows. Involved in the synthesis of meso-diaminopimelate (m-DAP or DL-DAP), required for both lysine and peptidoglycan biosynthesis. Catalyzes the direct conversion of tetrahydrodipicolinate to LL-diaminopimelate. The sequence is that of LL-diaminopimelate aminotransferase from Lachnoclostridium phytofermentans (strain ATCC 700394 / DSM 18823 / ISDg) (Clostridium phytofermentans).